Reading from the N-terminus, the 281-residue chain is 4-deoxy-L-threo-5-hexosulose-uronate ketol-isomerase (281 aa).

Positions 198, 200, 205, and 248 each coordinate Zn(2+).

This sequence belongs to the KduI family. It depends on Zn(2+) as a cofactor.

The catalysed reaction is 5-dehydro-4-deoxy-D-glucuronate = 3-deoxy-D-glycero-2,5-hexodiulosonate. It functions in the pathway glycan metabolism; pectin degradation; 2-dehydro-3-deoxy-D-gluconate from pectin: step 4/5. Catalyzes the isomerization of 5-dehydro-4-deoxy-D-glucuronate to 3-deoxy-D-glycero-2,5-hexodiulosonate. The chain is 4-deoxy-L-threo-5-hexosulose-uronate ketol-isomerase from Lacticaseibacillus paracasei (strain ATCC 334 / BCRC 17002 / CCUG 31169 / CIP 107868 / KCTC 3260 / NRRL B-441) (Lactobacillus paracasei).